Here is a 124-residue protein sequence, read N- to C-terminus: Fluoride-specific ion channel FluC (124 aa).

The next 4 helical transmembrane spans lie at 1–21 (MIGV…LRFA), 34–54 (FYAA…YLYG), 62–82 (VPLA…TTFS), and 101–121 (FSYL…GLIL). 2 residues coordinate Na(+): glycine 76 and threonine 79.

It belongs to the fluoride channel Fluc/FEX (TC 1.A.43) family.

It is found in the cell inner membrane. The catalysed reaction is fluoride(in) = fluoride(out). With respect to regulation, na(+) is not transported, but it plays an essential structural role and its presence is essential for fluoride channel function. In terms of biological role, fluoride-specific ion channel. Important for reducing fluoride concentration in the cell, thus reducing its toxicity. The polypeptide is Fluoride-specific ion channel FluC (Azotobacter vinelandii (strain DJ / ATCC BAA-1303)).